The primary structure comprises 96 residues: Small ribosomal subunit protein bS16 (96 aa).

Belongs to the bacterial ribosomal protein bS16 family.

The polypeptide is Small ribosomal subunit protein bS16 (Oenococcus oeni (strain ATCC BAA-331 / PSU-1)).